Consider the following 158-residue polypeptide: Cysteine proteinase inhibitor 4 (158 aa).

A signal peptide spans 1–24; that stretch reads MAARCPVGVASVLLLIVLVTVASA. The segment at 26–51 is disordered; the sequence is SGARSGGGGGGGIRELRGGGAGRRVG. The segment covering 29-49 has biased composition (gly residues); sequence RSGGGGGGGIRELRGGGAGRR. The region spanning 51 to 116 is the Cystatin domain; sequence GGRTEVRDVE…KYYLRVAAAE (66 aa). A Secondary area of contact motif is present at residues 101–105; the sequence is QVVSG.

Belongs to the cystatin family. Phytocystatin subfamily.

The protein resides in the secreted. Specific inhibitor of cysteine proteinases. Probably involved in the regulation of endogenous processes and in defense against pests and pathogens. This is Cysteine proteinase inhibitor 4 from Oryza sativa subsp. japonica (Rice).